A 261-amino-acid chain; its full sequence is 5'-nucleotidase SurE (261 aa).

Residues Asp-8, Asp-9, Ser-39, and Asn-91 each contribute to the a divalent metal cation site.

It belongs to the SurE nucleotidase family. The cofactor is a divalent metal cation.

The protein localises to the cytoplasm. It carries out the reaction a ribonucleoside 5'-phosphate + H2O = a ribonucleoside + phosphate. Its function is as follows. Nucleotidase that shows phosphatase activity on nucleoside 5'-monophosphates. This is 5'-nucleotidase SurE from Polaromonas naphthalenivorans (strain CJ2).